A 273-amino-acid chain; its full sequence is MAAGVIRSVCDFRLPLPSHESFLPIDLEAPEISEEEEEEEEEEEEEEEEEEVDQDQQGEGSQGCGPDSQSSGVVPQDPSSPETPMQLLRFSELISGDIQRYFGRKDTGQDPDAQDIYADSQPASCSARDLYYADLVCLAQDGPPEDEEAAEFRMHLPGGPEGQVHRLGHRGDRVPPLGPLAELFDYGLRQFSRPRISACRRLRLERKYSHITPMTQRKLPPSFWKEPVPNPLGLLHVGTPDFSDLLASWSAEGGSELQSGGTQGLEGTQLAEV.

Disordered stretches follow at residues 18 to 84 and 253 to 273; these read SHES…PETP and GGSE…LAEV. A compositionally biased stretch (acidic residues) spans 28–56; the sequence is EAPEISEEEEEEEEEEEEEEEEEEVDQDQ. Polar residues predominate over residues 67–83; the sequence is DSQSSGVVPQDPSSPET.

As to expression, specifically expressed in the stomach, pancreas and intestine. In gastrointestinal tissue, expression is primarily restricted to gastric G cells and duodenal enteroendocrine cells (EECs).

In terms of biological role, plays a critical role in intestinal function by promoting the development of enteroendocrine cells (EECs) of the gastrointestinal tract and pancreas. It is thereby required for normal enteroendocrine peptide hormone secretion. This is Protein PERCC1 from Mus musculus (Mouse).